The primary structure comprises 146 residues: Hemoglobin subunit beta (146 aa).

The 145-residue stretch at 2-146 folds into the Globin domain; sequence HWTADEKQLI…VAHALALGYH (145 aa). Residues histidine 63 and histidine 92 each contribute to the heme b site.

The protein belongs to the globin family. Heterotetramer of two alpha chains and two beta chains. Red blood cells.

Its function is as follows. Involved in oxygen transport from the lung to the various peripheral tissues. This is Hemoglobin subunit beta (HBB) from Chrysemys picta bellii (Western painted turtle).